Consider the following 124-residue polypeptide: Prefoldin subunit beta (124 aa).

This sequence belongs to the prefoldin subunit beta family. Heterohexamer of two alpha and four beta subunits.

It localises to the cytoplasm. Functionally, molecular chaperone capable of stabilizing a range of proteins. Seems to fulfill an ATP-independent, HSP70-like function in archaeal de novo protein folding. This Thermoplasma volcanium (strain ATCC 51530 / DSM 4299 / JCM 9571 / NBRC 15438 / GSS1) protein is Prefoldin subunit beta (pfdB).